The primary structure comprises 700 residues: Putative cysteine-rich receptor-like protein kinase 30 (700 aa).

The signal sequence occupies residues 1–24 (MRQNNLFSLIFWLVPVSLIIVVSA). 2 Gnk2-homologous domains span residues 25 to 129 (QLCS…NQPS) and 135 to 250 (LESV…LYPF). Residues 25–285 (QLCSEKFGTF…KDEKTIHTGT (261 aa)) lie on the Extracellular side of the membrane. Asn-63, Asn-105, Asn-146, Asn-150, and Asn-191 each carry an N-linked (GlcNAc...) asparagine glycan. The helical transmembrane segment at 286 to 306 (IIGIVIVVAMVIIMALLALGV) threads the bilayer. The Cytoplasmic segment spans residues 307–700 (SVCRSRKKYQ…SKSMYRNTED (394 aa)). One can recognise a Protein kinase domain in the interval 346-626 (FLASNKIGQG…IFQMLTNSSI (281 aa)). ATP is bound by residues 352 to 360 (IGQGGFGEV) and Lys-374. Catalysis depends on Asp-474, which acts as the Proton acceptor. Residue Ser-478 is modified to Phosphoserine. At Thr-514 the chain carries Phosphothreonine. At Tyr-522 the chain carries Phosphotyrosine.

It belongs to the protein kinase superfamily. Ser/Thr protein kinase family. CRK subfamily.

The protein resides in the membrane. The catalysed reaction is L-seryl-[protein] + ATP = O-phospho-L-seryl-[protein] + ADP + H(+). It carries out the reaction L-threonyl-[protein] + ATP = O-phospho-L-threonyl-[protein] + ADP + H(+). The protein is Putative cysteine-rich receptor-like protein kinase 30 (CRK30) of Arabidopsis thaliana (Mouse-ear cress).